The following is a 1031-amino-acid chain: Translation initiation factor IF-2 (1031 aa).

Disordered regions lie at residues 33 to 369 (KSHS…GDVL) and 388 to 436 (LKPL…AESL). Residues 45–56 (ELVRSKLSEPRV) are compositionally biased toward basic and acidic residues. The segment covering 96 to 105 (PAPAQQQAAA) has biased composition (low complexity). Over residues 108-123 (ASSSKPSPQRPDQLSS) the composition is skewed to polar residues. Low complexity predominate over residues 148–171 (PAAQEPQPAAASTRPEAAAKAGSP). Pro residues predominate over residues 184-200 (VLPPPRRAASGPEPPQR). The span at 250 to 281 (TRPEPRSPVAKKEESSDSGKADEAPRPQRRLE) shows a compositional bias: basic and acidic residues. Residues 286 to 299 (PTRPVAKPLPPEPD) show a composition bias toward pro residues. Positions 419-435 (RPSASAEATAPEAAAES) are enriched in low complexity. Residues 522–695 (PRPPVVTIMG…LLVADVAELQ (174 aa)) form the tr-type G domain. Positions 531–538 (GHVDHGKT) are G1. 531–538 (GHVDHGKT) contributes to the GTP binding site. The tract at residues 556–560 (GITQR) is G2. Residues 581-584 (DTPG) form a G3 region. GTP contacts are provided by residues 581 to 585 (DTPGH) and 635 to 638 (NKID). Residues 635–638 (NKID) form a G4 region. Positions 671 to 673 (SAL) are G5.

Belongs to the TRAFAC class translation factor GTPase superfamily. Classic translation factor GTPase family. IF-2 subfamily.

The protein localises to the cytoplasm. Functionally, one of the essential components for the initiation of protein synthesis. Protects formylmethionyl-tRNA from spontaneous hydrolysis and promotes its binding to the 30S ribosomal subunits. Also involved in the hydrolysis of GTP during the formation of the 70S ribosomal complex. This Synechococcus sp. (strain JA-3-3Ab) (Cyanobacteria bacterium Yellowstone A-Prime) protein is Translation initiation factor IF-2.